The following is a 303-amino-acid chain: Olfactory receptor 4X2 (303 aa).

The Extracellular segment spans residues 1–17 (MTEFIFLVLSPNQEVQR). A helical membrane pass occupies residues 18-41 (VCFVIFLFLYTAIVLGNFLIVLTV). Residues 42-49 (MTSRSLGS) are Cytoplasmic-facing. A helical membrane pass occupies residues 50–71 (PMYFFLSYLSFMEICYSSATAP). At 72–92 (KLISDLLAERKVISWWGCMAQ) the chain is on the extracellular side. Cys89 and Cys181 are joined by a disulfide. A helical transmembrane segment spans residues 93-112 (LFFLHFFGGTEIFLLTVMAY). Over 113 to 131 (DHYVAICKPLSYTTIMNWQ) the chain is Cytoplasmic. A helical membrane pass occupies residues 132-150 (VCTVLVGIAWVGGFMHSFA). Residues 151 to 187 (QILLIFHLLFCGPNVINHYFCDLVPLLKLACSDTFLI) are Extracellular-facing. The chain crosses the membrane as a helical span at residues 188–211 (GLLIVANGGTLSVISFGVLLASYM). The Cytoplasmic segment spans residues 212–227 (VILLHLRTWSSEGWCK). Residues 228–250 (ALSTCGSHFAVVILFFGPCVFNS) traverse the membrane as a helical segment. The Extracellular portion of the chain corresponds to 251–261 (LRPSTTLPIDK). Residues 262–281 (MVAVFYTVITAILNPVIYSL) form a helical membrane-spanning segment. Over 282 to 303 (RNAEMRKAMKRLWIRTLRLNEK) the chain is Cytoplasmic.

This sequence belongs to the G-protein coupled receptor 1 family.

The protein localises to the cell membrane. Functionally, odorant receptor. The polypeptide is Olfactory receptor 4X2 (OR4X2) (Homo sapiens (Human)).